Consider the following 943-residue polypeptide: UvrABC system protein A (943 aa).

31–38 lines the ATP pocket; it reads GLSGSGKS. The C4-type zinc finger occupies 253–280; sequence CPHCGYSVPELEPRLFSFNNPAGACPTC. 2 consecutive ABC transporter domains span residues 310 to 587 and 607 to 937; these read WDRR…PNSI and LDKK…RFLK. Residue 640 to 647 coordinates ATP; sequence GVSGSGKS. The segment at 740–766 adopts a C4-type zinc-finger fold; it reads CEACQGDGVLKVEMHFLPDVYVPCDQC.

This sequence belongs to the ABC transporter superfamily. UvrA family. Forms a heterotetramer with UvrB during the search for lesions.

It localises to the cytoplasm. Its function is as follows. The UvrABC repair system catalyzes the recognition and processing of DNA lesions. UvrA is an ATPase and a DNA-binding protein. A damage recognition complex composed of 2 UvrA and 2 UvrB subunits scans DNA for abnormalities. When the presence of a lesion has been verified by UvrB, the UvrA molecules dissociate. This is UvrABC system protein A from Haemophilus influenzae (strain ATCC 51907 / DSM 11121 / KW20 / Rd).